The following is a 62-amino-acid chain: Potassium channel toxin alpha-KTx Tx308 (62 aa).

The first 18 residues, 1 to 18 (MQKLFIVLLLFCILRLDA), serve as a signal peptide directing secretion. 3 cysteine pairs are disulfide-bonded: Cys-28-Cys-46, Cys-33-Cys-59, and Cys-37-Cys-61.

This sequence belongs to the short scorpion toxin superfamily. Potassium channel inhibitor family. Alpha-KTx 23 subfamily. In terms of tissue distribution, expressed by the venom gland.

It is found in the secreted. In terms of biological role, may block potassium channels. In Buthus israelis (Israeli scorpion), this protein is Potassium channel toxin alpha-KTx Tx308.